The following is a 161-amino-acid chain: Large ribosomal subunit protein uL11 (161 aa).

Belongs to the universal ribosomal protein uL11 family. As to quaternary structure, part of the ribosomal stalk of the 50S ribosomal subunit. Interacts with L10 and the large rRNA to form the base of the stalk. L10 forms an elongated spine to which L12 dimers bind in a sequential fashion forming a multimeric L10(L12)X complex.

Forms part of the ribosomal stalk which helps the ribosome interact with GTP-bound translation factors. This chain is Large ribosomal subunit protein uL11, found in Methanosarcina barkeri (strain Fusaro / DSM 804).